The sequence spans 578 residues: Pentatricopeptide repeat-containing protein At4g22760 (578 aa).

PPR repeat units lie at residues 68–102, 103–137, 138–168, 169–203, 204–230, 231–261, 262–292, 293–327, 330–364, 365–395, 396–430, 431–465, and 466–496; these read DSFS…GIPP, SSHA…GLCG, CVYV…IAEK, NTVS…DAVS, WNLI…MPLK, SPAS…MPQK, NGVS…MSKK, DKLV…NSYI, DEIT…GIKI, DDLL…LNKK, DTVS…KIPP, NVVT…NLEP, and SADH…MPMQ. The type E motif stretch occupies residues 501-576; that stretch reads VWGALLLASG…TLGCSWVEGS (76 aa).

It belongs to the PPR family. PCMP-E subfamily.

In Arabidopsis thaliana (Mouse-ear cress), this protein is Pentatricopeptide repeat-containing protein At4g22760 (PCMP-E6).